A 230-amino-acid chain; its full sequence is Type 4 apparatus protein DotY (230 aa).

The disordered stretch occupies residues 202 to 230 (EPKALETKREEIRQEIESGAEAPTTQSIR). Basic and acidic residues predominate over residues 204 to 217 (KALETKREEIRQEI).

The T4BSS is a complex nanomachine composed of several subcomplexes. This subunit is part of the Type IV Coupling Complex (T4CC), a subcomplex composed of the DotLMNYZ core and the IcmSW-LvgA adapter subunits, linked by the C-terminal tail of DotL. Six DotLMNYZ hetero-pentameric units may assemble into a hexameric nanomachine, forming an inner membrane channel for effectors to pass through. Interacts exclusively with DotZ. DotY and DotZ are co-dependent for the assembly into the T4CC.

It is found in the cytoplasm. Functionally, component of the Dot/Icm type IVB secretion system (T4BSS), which is used to inject bacterial effector proteins into eukaryotic host cells. Part of a subcomplex which recruits effector proteins and delivers them to the core transmembrane subcomplex. DotY and DotZ play a role in effector translocation, but are not essential and do not influence the stability of the subcomplex main components. The DotY/DotZ main function is to optimize secretion by modulating the delivery trajectory of the IcmSW module and the localization of the machinery to the poles. This is Type 4 apparatus protein DotY from Legionella pneumophila subsp. pneumophila (strain Philadelphia 1 / ATCC 33152 / DSM 7513).